Consider the following 275-residue polypeptide: Beta-lactamase OXA-2 (275 aa).

The N-terminal stretch at 1-21 (MAIRIFAILFSIFSLATFAHA) is a signal peptide. S72 (acyl-ester intermediate) is an active-site residue. K75 bears the N6-carboxylysine mark. 210-212 (KTG) is a binding site for substrate.

The protein belongs to the class-D beta-lactamase family.

It carries out the reaction a beta-lactam + H2O = a substituted beta-amino acid. This is an oxacillin-hydrolyzing beta-lactamase. In Escherichia coli, this protein is Beta-lactamase OXA-2 (bla).